Reading from the N-terminus, the 565-residue chain is Atlastin-2 (565 aa).

Topologically, residues 1–458 are cytoplasmic; it reads MVLKKGVKFF…NIFYAARTPA (458 aa). The 246-residue stretch at 73 to 318 folds into the GB1/RHD3-type G domain; it reads DLNIVVVSVA…LVPLLLAPEN (246 aa). Arg86, Lys87, Gly88, Lys89, Ser90, Phe91, Gln157, Arg226, and Asp227 together coordinate GDP. GTP-binding residues include Arg86, Lys87, Gly88, Lys89, Ser90, and Phe91. Ser90 serves as a coordination point for Mg(2+). Residues Arg226 and Asp227 each contribute to the GTP site. Positions 238-266 form a coiled coil; it reads LEGGKQFLEKRLQVKKNQHEELQNVRKHI. Lys252 carries the post-translational modification N6-methyllysine. Residues Val285 and Asn288 each coordinate GDP. Residue Val285 participates in GTP binding. The 3HB (three-helix bundle) domain stretch occupies residues 356–447; that stretch reads MLQATAEANN…YANFIKHNDG (92 aa). The segment at 448–456 is linker; it reads KNIFYAART. Residues 459-479 traverse the membrane as a helical segment; it reads TLFAVMFAMYIISGLTGFIGL. Over 480 to 481 the chain is Lumenal; the sequence is NS. Residues 482-502 form a helical membrane-spanning segment; the sequence is IAVLCNLVMGLALTFLCTWAY. Residues 503-565 are Cytoplasmic-facing; sequence VKYSGEFREI…VSHHARLKTD (63 aa). The tract at residues 529-565 is autoinhibitory domain; it reads KPLGDNLMEENIRQSVTNSIKAGLTDQVSHHARLKTD.

It belongs to the TRAFAC class dynamin-like GTPase superfamily. GB1/RHD3 GTPase family. GB1 subfamily. In terms of assembly, monomeric and homodimeric. The homodimer, transiently formed by two molecules on opposing membranes, is the active form mediating ER membrane fusion. Interacts with REEP5 and RTN3; these proteins are involved in endoplasmic reticulum tubular network organization. Interacts with ZFYVE27; both proteins are involved in endoplasmic reticulum tubular network organization.

The protein localises to the endoplasmic reticulum membrane. The enzyme catalyses GTP + H2O = GDP + phosphate + H(+). In terms of biological role, atlastin-2 (ATL2) is a membrane-anchored GTPase that mediates the GTP-dependent fusion of endoplasmic reticulum (ER) membranes, maintaining the continuous ER network. It facilitates the formation of three-way junctions where ER tubules intersect. Two atlastin-2 on neighboring ER tubules bind GTP and form loose homodimers through the GB1/RHD3-type G domains and 3HB regions. Upon GTP hydrolysis, the 3HB regions tighten, pulling the membranes together to drive their fusion. After fusion, the homodimer disassembles upon release of inorganic phosphate (Pi). Subsequently, GDP dissociates, resetting the monomers to a conformation ready for a new fusion cycle. The chain is Atlastin-2 from Macaca fascicularis (Crab-eating macaque).